The following is a 447-amino-acid chain: Tetratricopeptide repeat protein 23 (447 aa).

TPR repeat units follow at residues 45–78 (LHLC…TRIC), 137–170 (IELF…SKEL), 186–219 (ARIR…VEIS), and 356–389 (AETY…QTLL).

In terms of assembly, found Associated with the EvC complex composed of EFCAB7, IQCE, EVC2 and EVC.

It localises to the cell projection. The protein localises to the cilium. Participates positively in the ciliary Hedgehog (Hh) signaling. This Homo sapiens (Human) protein is Tetratricopeptide repeat protein 23 (TTC23).